We begin with the raw amino-acid sequence, 182 residues long: MMELQELYKKTITPALQKEFGFKSVMAVPRLEKITLNMGLGEAVADKKVIERAMDDMIKISGQKPLITYARKSEAGFKIRAGWPIGCKVTLRRDRMYEFLKRLISIAIPRIRDFRGLSPKSFDGRGNYSLGIREQIVFPEIQYDKVDAIRGMDITITTTARTDEEGRALLKAFGFPLKDESR.

It belongs to the universal ribosomal protein uL5 family. Part of the 50S ribosomal subunit; part of the 5S rRNA/L5/L18/L25 subcomplex. Contacts the 5S rRNA and the P site tRNA. Forms a bridge to the 30S subunit in the 70S ribosome.

In terms of biological role, this is one of the proteins that bind and probably mediate the attachment of the 5S RNA into the large ribosomal subunit, where it forms part of the central protuberance. In the 70S ribosome it contacts protein S13 of the 30S subunit (bridge B1b), connecting the 2 subunits; this bridge is implicated in subunit movement. Contacts the P site tRNA; the 5S rRNA and some of its associated proteins might help stabilize positioning of ribosome-bound tRNAs. In Coxiella burnetii (strain CbuK_Q154) (Coxiella burnetii (strain Q154)), this protein is Large ribosomal subunit protein uL5.